The chain runs to 79 residues: Submaxillary gland androgen-regulated protein 3B (79 aa).

Positions 1–22 (MKSLTWILGLWALAACFTPGES) are cleaved as a signal peptide. The interval 19–79 (PGESQRGPRG…GIFPPPPPQP (61 aa)) is disordered. Gln-23 is modified (pyrrolidone carboxylic acid). Positions 28 to 79 (GPYPPGPLAPPQPFGPGFVPPPPPPPYGPGRIPPPPPAPYGPGIFPPPPPQP) are enriched in pro residues.

This sequence belongs to the PROL1/PROL3 family. In terms of processing, P-A and D1A are probably degradation products of P-B. Secreted into saliva by submaxillary gland. Not expressed in heart, brain, lung, liver, skeletal muscle, Kidney, pancreas or placenta.

It localises to the secreted. The protein is Submaxillary gland androgen-regulated protein 3B (SMR3B) of Homo sapiens (Human).